The primary structure comprises 153 residues: Ribosome maturation factor RimP (153 aa).

This sequence belongs to the RimP family.

The protein localises to the cytoplasm. Its function is as follows. Required for maturation of 30S ribosomal subunits. This Picosynechococcus sp. (strain ATCC 27264 / PCC 7002 / PR-6) (Agmenellum quadruplicatum) protein is Ribosome maturation factor RimP.